The sequence spans 1137 residues: AP-4 complex subunit epsilon-1 (1137 aa).

Residues Ser700 and Ser857 each carry the phosphoserine modification. The interaction with TEPSIN stretch occupies residues Ser727 to Ser1137.

The protein belongs to the adaptor complexes large subunit family. Adaptor protein complex 4 (AP-4) is a heterotetramer composed of two large adaptins (epsilon-type subunit AP4E1 and beta-type subunit AP4B1), a medium adaptin (mu-type subunit AP4M1) and a small adaptin (sigma-type AP4S1). Interacts with TEPSIN. Interacts with GRIA2; probably indirect it mediates the somatodendritic localization of GRIA2 in neurons. Widely expressed.

It localises to the golgi apparatus. Its subcellular location is the trans-Golgi network membrane. Functionally, component of the adaptor protein complex 4 (AP-4). Adaptor protein complexes are vesicle coat components involved both in vesicle formation and cargo selection. They control the vesicular transport of proteins in different trafficking pathways. AP-4 forms a non clathrin-associated coat on vesicles departing the trans-Golgi network (TGN) and may be involved in the targeting of proteins from the trans-Golgi network (TGN) to the endosomal-lysosomal system. It is also involved in protein sorting to the basolateral membrane in epithelial cells and the proper asymmetric localization of somatodendritic proteins in neurons. AP-4 is involved in the recognition and binding of tyrosine-based sorting signals found in the cytoplasmic part of cargos, but may also recognize other types of sorting signal. The polypeptide is AP-4 complex subunit epsilon-1 (Homo sapiens (Human)).